A 307-amino-acid polypeptide reads, in one-letter code: MPPATGDIDRQIEQLMECKALSETEVKMLCEHAKTILVEEYNVQPVKCPVTVCGDIHGQFYDLIELFRIGGSSPDTNYLFMGDYVDRGYYSVETVSLLVALKVRYRDRLTILRGNHESRQITQVYGFYDECLRKYGNANVWKHFTDLFDYLPLTALIESQVFCLHGGLSPSLDTLDNIRSLDRIQEVPHEGPMCDLLWSDPDDRCGWGISPRGAGYTFGQDIATQFNHTNGLSLISRAHQLVMEGFNWCQEKNVVTVFSAPNYCYRCGNMAAILEIGENMDQNFLQFDPAPRQVEPETTRKTPDYFL.

Mn(2+) is bound by residues D55, H57, D83, and N115. The active-site Proton donor is H116. Residues H165 and H239 each contribute to the Mn(2+) site. A Leucine methyl ester modification is found at L307.

The protein belongs to the PPP phosphatase family. PP-2A subfamily. In terms of assembly, PP2A consists of a common heterodimeric core enzyme, composed of a 36 kDa catalytic subunit (subunit C) and a 65 kDa constant regulatory subunit (subunit A), that associates with a variety of regulatory subunits such as subunits B (the R2/B/PR55/B55, R3/B''/PR72/PR130/PR59 and R5/B'/B56 families). Also interacts with CHIP and TAF12B. Interacts with B'THETA. Interacts with CLC-A, CLC-B, CLC-C and CLC-G. Mn(2+) serves as cofactor. In terms of processing, reversibly methyl esterified on Leu-307 by leucine carboxyl methyltransferase 1 (LCMT1) and pectin methylesterase 1 (PME1). Carboxyl methylation influences the affinity of the catalytic subunit for the different regulatory subunits, thereby modulating the PP2A holoenzyme's substrate specificity, enzyme activity and cellular localization. Phosphorylation of either threonine (by autophosphorylation-activated protein kinase) or tyrosine results in inactivation of the phosphatase. Auto-dephosphorylation has been suggested as a mechanism for reactivation. Post-translationally, ubiquitinated. CHIP-mediated ubiquitination enhances phosphatase activity after an abiotic stress such as low temperature or darkness.

The protein resides in the cytoplasm. It is found in the cytosol. Its subcellular location is the peroxisome. It carries out the reaction O-phospho-L-seryl-[protein] + H2O = L-seryl-[protein] + phosphate. The catalysed reaction is O-phospho-L-threonyl-[protein] + H2O = L-threonyl-[protein] + phosphate. In terms of biological role, associates with the serine/threonine-protein phosphatase PP2A regulatory subunits A and B' to positively regulates beta-oxidation of fatty acids and protoauxins in peroxisomes by dephosphorylating peroxisomal beta-oxidation-related proteins. Involved in the positive regulation of salt stress responses. May function by increasing chloride channel activities on vacuolar membranes. The polypeptide is Serine/threonine-protein phosphatase PP2A-5 catalytic subunit (Arabidopsis thaliana (Mouse-ear cress)).